A 203-amino-acid chain; its full sequence is GTP cyclohydrolase-2 (203 aa).

49-53 (RIHSE) lines the GTP pocket. Residues C54, C65, and C67 each coordinate Zn(2+). Residues Q70, 92-94 (EGR), and T114 contribute to the GTP site. D126 serves as the catalytic Proton acceptor. R128 acts as the Nucleophile in catalysis. 2 residues coordinate GTP: T149 and K154.

The protein belongs to the GTP cyclohydrolase II family. Requires Zn(2+) as cofactor.

It carries out the reaction GTP + 4 H2O = 2,5-diamino-6-hydroxy-4-(5-phosphoribosylamino)-pyrimidine + formate + 2 phosphate + 3 H(+). Its pathway is cofactor biosynthesis; riboflavin biosynthesis; 5-amino-6-(D-ribitylamino)uracil from GTP: step 1/4. Catalyzes the conversion of GTP to 2,5-diamino-6-ribosylamino-4(3H)-pyrimidinone 5'-phosphate (DARP), formate and pyrophosphate. This Shewanella sp. (strain ANA-3) protein is GTP cyclohydrolase-2.